Reading from the N-terminus, the 732-residue chain is Myosin heavy chain kinase B (732 aa).

The region spanning 124–328 (DPYTTTAQWT…ICQYLNLQSI (205 aa)) is the Alpha-type protein kinase domain. Position 298 to 303 (298 to 303 (GIGNLG)) interacts with ATP. The disordered stretch occupies residues 331-428 (KSEKSDCGTV…TNKERSKSKS (98 aa)). The span at 356 to 394 (NNNNNNNNNNNNNNNNNNSNNNNNNNSSISKSLVEISSG) shows a compositional bias: low complexity. Basic and acidic residues predominate over residues 395–404 (SKERNDRDSP). The segment covering 405 to 419 (SRQLFVSNDGNTLNT) has biased composition (polar residues). WD repeat units lie at residues 458–486 (KGYH…RVYD), 500–528 (GHEG…KVWD), 540–568 (GHDK…KVWD), 580–608 (SHAR…KVWD), 620–648 (GHTK…RVWN), 660–688 (GHDR…KIWD), and 700–730 (GHNA…RVWG).

It belongs to the protein kinase superfamily. Alpha-type protein kinase family. ALPK subfamily.

It catalyses the reaction L-threonyl-[myosin heavy-chain] + ATP = O-phospho-L-threonyl-[myosin heavy-chain] + ADP + H(+). In terms of biological role, catalyzes its autophosphorylation, which is needed for enzymatic activity and phosphorylates myosin II heavy chain at a threonine in the C-terminal tail region. This phosphorylation is critical in regulating the assembly and disassembly of myosin II filament. Participates in control of myosin localization. The protein is Myosin heavy chain kinase B (mhkB) of Dictyostelium discoideum (Social amoeba).